We begin with the raw amino-acid sequence, 359 residues long: Peptide chain release factor 1 (359 aa).

Residue Gln-235 is modified to N5-methylglutamine.

This sequence belongs to the prokaryotic/mitochondrial release factor family. In terms of processing, methylated by PrmC. Methylation increases the termination efficiency of RF1.

Its subcellular location is the cytoplasm. Functionally, peptide chain release factor 1 directs the termination of translation in response to the peptide chain termination codons UAG and UAA. This Nitrosomonas europaea (strain ATCC 19718 / CIP 103999 / KCTC 2705 / NBRC 14298) protein is Peptide chain release factor 1.